A 385-amino-acid polypeptide reads, in one-letter code: 3-dehydroquinate synthase (385 aa).

NAD(+) is bound by residues Gly122–Asp126, Thr146–Thr147, Lys159, and Lys168. The Zn(2+) site is built by Glu201, His264, and His282.

Belongs to the sugar phosphate cyclases superfamily. Dehydroquinate synthase family. The cofactor is Co(2+). Zn(2+) serves as cofactor. It depends on NAD(+) as a cofactor.

The protein resides in the cytoplasm. The enzyme catalyses 7-phospho-2-dehydro-3-deoxy-D-arabino-heptonate = 3-dehydroquinate + phosphate. It functions in the pathway metabolic intermediate biosynthesis; chorismate biosynthesis; chorismate from D-erythrose 4-phosphate and phosphoenolpyruvate: step 2/7. Catalyzes the conversion of 3-deoxy-D-arabino-heptulosonate 7-phosphate (DAHP) to dehydroquinate (DHQ). The protein is 3-dehydroquinate synthase of Rhodospirillum rubrum (strain ATCC 11170 / ATH 1.1.1 / DSM 467 / LMG 4362 / NCIMB 8255 / S1).